Consider the following 552-residue polypeptide: HTH-type transcriptional regulator SgrR (552 aa).

Residues 1 to 116 (MPSGRLQQQF…LISHLGRSFR (116 aa)) enclose the HTH marR-type domain. The H-T-H motif DNA-binding region spans 26–49 (LNELADLLNCSRRHMRTLLNTMQA). Residues 163 to 493 (ELEADIAHHW…RDWQGDAAQW (331 aa)) are solute-binding.

Functionally, activates the small RNA gene sgrS under glucose-phosphate stress conditions as well as yfdZ. Represses its own transcription under both stress and non-stress conditions. Might act as a sensor of the intracellular accumulation of phosphoglucose by binding these molecules in its C-terminal solute-binding domain. The protein is HTH-type transcriptional regulator SgrR of Salmonella typhimurium (strain LT2 / SGSC1412 / ATCC 700720).